The primary structure comprises 239 residues: Large ribosomal subunit protein uL2 (239 aa).

Disordered stretches follow at residues 1 to 20 (MGHR…YRAP) and 202 to 239 (FGGG…RRKR).

The protein belongs to the universal ribosomal protein uL2 family. As to quaternary structure, part of the 50S ribosomal subunit. Forms a bridge to the 30S subunit in the 70S ribosome.

Functionally, one of the primary rRNA binding proteins. Required for association of the 30S and 50S subunits to form the 70S ribosome, for tRNA binding and peptide bond formation. It has been suggested to have peptidyltransferase activity; this is somewhat controversial. Makes several contacts with the 16S rRNA in the 70S ribosome. The chain is Large ribosomal subunit protein uL2 from Methanosphaerula palustris (strain ATCC BAA-1556 / DSM 19958 / E1-9c).